Here is a 198-residue protein sequence, read N- to C-terminus: dTTP/UTP pyrophosphatase (198 aa).

D69 serves as the catalytic Proton acceptor.

Belongs to the Maf family. YhdE subfamily. It depends on a divalent metal cation as a cofactor.

The protein resides in the cytoplasm. The enzyme catalyses dTTP + H2O = dTMP + diphosphate + H(+). It carries out the reaction UTP + H2O = UMP + diphosphate + H(+). In terms of biological role, nucleoside triphosphate pyrophosphatase that hydrolyzes dTTP and UTP. May have a dual role in cell division arrest and in preventing the incorporation of modified nucleotides into cellular nucleic acids. The polypeptide is dTTP/UTP pyrophosphatase (Idiomarina loihiensis (strain ATCC BAA-735 / DSM 15497 / L2-TR)).